The primary structure comprises 706 residues: Polyribonucleotide nucleotidyltransferase (706 aa).

Asp-483 and Asp-489 together coordinate Mg(2+). The KH domain occupies 550–609 (PRITTIWVKTDKIRDVIGTGGKNIRNITETTGVTVDIEDTGRINIASTSKEACDLAIQMI). The S1 motif domain maps to 619 to 687 (GKLYMGIVKK…KNGKVKLSRK (69 aa)).

Belongs to the polyribonucleotide nucleotidyltransferase family. Mg(2+) serves as cofactor.

The protein localises to the cytoplasm. It catalyses the reaction RNA(n+1) + phosphate = RNA(n) + a ribonucleoside 5'-diphosphate. Involved in mRNA degradation. Catalyzes the phosphorolysis of single-stranded polyribonucleotides processively in the 3'- to 5'-direction. The protein is Polyribonucleotide nucleotidyltransferase of Pelobacter propionicus (strain DSM 2379 / NBRC 103807 / OttBd1).